Reading from the N-terminus, the 699-residue chain is Elongation factor G (699 aa).

The region spanning 8-289 is the tr-type G domain; the sequence is ERYRNIGISA…AVVEYMPAPT (282 aa). GTP is bound by residues 17 to 24, 88 to 92, and 142 to 145; these read AHIDAGKT, DTPGH, and NKMD.

The protein belongs to the TRAFAC class translation factor GTPase superfamily. Classic translation factor GTPase family. EF-G/EF-2 subfamily.

The protein localises to the cytoplasm. Its function is as follows. Catalyzes the GTP-dependent ribosomal translocation step during translation elongation. During this step, the ribosome changes from the pre-translocational (PRE) to the post-translocational (POST) state as the newly formed A-site-bound peptidyl-tRNA and P-site-bound deacylated tRNA move to the P and E sites, respectively. Catalyzes the coordinated movement of the two tRNA molecules, the mRNA and conformational changes in the ribosome. In Variovorax paradoxus (strain S110), this protein is Elongation factor G.